The chain runs to 500 residues: MNDFPWLTIIVVFPISAGSLMLFLPHRGNKVNKWYTICICILELLLTTYAFCYNFKMDDPLIQLSEDYKWINFFDFYWRMGIDGLSIGTILLTGFITTLATLAAFPVTRDSRLFHFLMLAMYSGQIGSFSSRDLLLFFIMWELELIPVYLLLSMWGGKKRLYSATKFILYTAGSSIFLLIGVLGISLYGSNEPTLNLELLANQSYPVTLEILFYIAFLIAFAVKSPIIPLHTWLPDTHGEAHYSTCMLLAGILLKMGAYGLVRINMELLPHAHSMFSPWLMVVGTIQIIYAASTSPGQRNLKKRIAYSSVSHMGFIIIGISSITDPGLNGAILQIISHGFIGAALFFLAGTSYDRIRLVYLDEMGGMAISIPKIFTMFTILSMASLALPGMSGFVAELIVFFGIITSQKYFLISKILIIFVMAIGMILTPIYLLSMSRQMFYGYKLINVKNFSFFDSGPRELFLSISILLPIIGIGIYPDFVLSLASDKVESILSNYFYG.

The next 14 membrane-spanning stretches (helical) occupy residues 4 to 24 (FPWL…MLFL), 35 to 55 (YTIC…CYNF), 87 to 107 (IGTI…AFPV), 113 to 130 (LFHF…GSFS), 134 to 154 (LLLF…LLSM), 167 to 187 (FILY…GISL), 211 to 231 (ILFY…IPLH), 242 to 262 (HYST…YGLV), 272 to 292 (AHSM…IYAA), 305 to 325 (IAYS…SITD), 330 to 350 (GAIL…FLAG), 386 to 406 (LALP…GIIT), 416 to 436 (ILII…LLSM), and 462 to 482 (LFLS…PDFV).

This sequence belongs to the complex I subunit 4 family.

The protein localises to the plastid. Its subcellular location is the chloroplast thylakoid membrane. The enzyme catalyses a plastoquinone + NADH + (n+1) H(+)(in) = a plastoquinol + NAD(+) + n H(+)(out). It carries out the reaction a plastoquinone + NADPH + (n+1) H(+)(in) = a plastoquinol + NADP(+) + n H(+)(out). The sequence is that of NAD(P)H-quinone oxidoreductase chain 4, chloroplastic from Olimarabidopsis pumila (Dwarf rocket).